A 213-amino-acid chain; its full sequence is 3-isopropylmalate dehydratase small subunit (213 aa).

It belongs to the LeuD family. LeuD type 1 subfamily. Heterodimer of LeuC and LeuD.

It carries out the reaction (2R,3S)-3-isopropylmalate = (2S)-2-isopropylmalate. It participates in amino-acid biosynthesis; L-leucine biosynthesis; L-leucine from 3-methyl-2-oxobutanoate: step 2/4. Functionally, catalyzes the isomerization between 2-isopropylmalate and 3-isopropylmalate, via the formation of 2-isopropylmaleate. This Pseudomonas savastanoi pv. phaseolicola (strain 1448A / Race 6) (Pseudomonas syringae pv. phaseolicola (strain 1448A / Race 6)) protein is 3-isopropylmalate dehydratase small subunit.